Here is a 759-residue protein sequence, read N- to C-terminus: Catalase-peroxidase (759 aa).

A disordered region spans residues 1–24 (MTQDKCPFKEQPSQPNFAGGGTSN). A cross-link (tryptophyl-tyrosyl-methioninium (Trp-Tyr) (with M-268)) is located at residues 96–242 (WHSAGTYRVF…LAAAHMGLIY (147 aa)). Residue histidine 97 is the Proton acceptor of the active site. Residues 242 to 268 (YVNPEGPDGNPDPIAAAHDIRDTFGRM) constitute a cross-link (tryptophyl-tyrosyl-methioninium (Tyr-Met) (with W-96)). Histidine 283 provides a ligand contact to heme b.

The protein belongs to the peroxidase family. Peroxidase/catalase subfamily. In terms of assembly, homodimer or homotetramer. The cofactor is heme b. Formation of the three residue Trp-Tyr-Met cross-link is important for the catalase, but not the peroxidase activity of the enzyme.

It is found in the cytoplasm. It catalyses the reaction H2O2 + AH2 = A + 2 H2O. The enzyme catalyses 2 H2O2 = O2 + 2 H2O. In terms of biological role, bifunctional enzyme with both catalase and broad-spectrum peroxidase activity. The polypeptide is Catalase-peroxidase (Neosartorya fischeri (strain ATCC 1020 / DSM 3700 / CBS 544.65 / FGSC A1164 / JCM 1740 / NRRL 181 / WB 181) (Aspergillus fischerianus)).